The following is a 44-amino-acid chain: Non-structural protein 7b (44 aa).

The helical transmembrane segment at Phe-9–Trp-29 threads the bilayer.

The protein localises to the host membrane. This Bat coronavirus HKU3 (BtCoV) protein is Non-structural protein 7b.